The primary structure comprises 332 residues: tRNA U34 carboxymethyltransferase (332 aa).

Carboxy-S-adenosyl-L-methionine is bound by residues Lys96, Trp110, Lys115, Gly135, 157 to 159, 190 to 191, Met205, Tyr209, and Arg324; these read DPT and IE.

The protein belongs to the class I-like SAM-binding methyltransferase superfamily. CmoB family. Homotetramer.

It catalyses the reaction carboxy-S-adenosyl-L-methionine + 5-hydroxyuridine(34) in tRNA = 5-carboxymethoxyuridine(34) in tRNA + S-adenosyl-L-homocysteine + H(+). Its function is as follows. Catalyzes carboxymethyl transfer from carboxy-S-adenosyl-L-methionine (Cx-SAM) to 5-hydroxyuridine (ho5U) to form 5-carboxymethoxyuridine (cmo5U) at position 34 in tRNAs. The polypeptide is tRNA U34 carboxymethyltransferase (Alteromonas mediterranea (strain DSM 17117 / CIP 110805 / LMG 28347 / Deep ecotype)).